The primary structure comprises 159 residues: Small ribosomal subunit protein bS6 (159 aa).

2 non-standard amino acids (selenocysteine) are found at residues Sec46 and Sec52.

The protein belongs to the bacterial ribosomal protein bS6 family.

Functionally, binds together with bS18 to 16S ribosomal RNA. The protein is Small ribosomal subunit protein bS6 of Desulfotalea psychrophila (strain LSv54 / DSM 12343).